Here is a 660-residue protein sequence, read N- to C-terminus: Replication restart protein PriA (660 aa).

One can recognise a Helicase ATP-binding domain in the interval 145–313 (IIGSEKTNVF…KNNQIKKIIM (169 aa)). 158 to 165 (GIPGSGKT) is a binding site for ATP. Positions 256 to 259 (DEEH) match the DEAH box motif. Residues cysteine 370, cysteine 373, cysteine 379, cysteine 382, cysteine 397, cysteine 400, cysteine 410, and cysteine 413 each contribute to the Zn(2+) site. The 153-residue stretch at 405 to 557 (KTASHCPQCE…QFYEEELDIR (153 aa)) folds into the Helicase C-terminal domain.

Belongs to the helicase family. PriA subfamily. As to quaternary structure, component of the replication restart primosome. Zn(2+) is required as a cofactor.

It catalyses the reaction Couples ATP hydrolysis with the unwinding of duplex DNA by translocating in the 3'-5' direction.. The catalysed reaction is ATP + H2O = ADP + phosphate + H(+). Initiates the restart of stalled replication forks, which reloads the replicative helicase on sites other than the origin of replication. Recognizes and binds to abandoned replication forks and remodels them to uncover a helicase loading site. Promotes assembly of the primosome at these replication forks. In Borreliella burgdorferi (strain ATCC 35210 / DSM 4680 / CIP 102532 / B31) (Borrelia burgdorferi), this protein is Replication restart protein PriA.